The following is a 196-amino-acid chain: Holliday junction branch migration complex subunit RuvA (196 aa).

The domain I stretch occupies residues 1-62; sequence MYEYINGLIT…ENEMTLYGFI (62 aa). The interval 63–141 is domain II; that stretch reads DENEKYLFNK…DLALSAGMTV (79 aa). Residues 142-146 form a flexible linker region; it reads ETVPT. Residues 147–196 are domain III; that stretch reads TDNQALADALAALESLGYSAKDVAKLQTVLANQKDTTDGYIRSALKFLVK.

The protein belongs to the RuvA family. In terms of assembly, homotetramer. Forms an RuvA(8)-RuvB(12)-Holliday junction (HJ) complex. HJ DNA is sandwiched between 2 RuvA tetramers; dsDNA enters through RuvA and exits via RuvB. An RuvB hexamer assembles on each DNA strand where it exits the tetramer. Each RuvB hexamer is contacted by two RuvA subunits (via domain III) on 2 adjacent RuvB subunits; this complex drives branch migration. In the full resolvosome a probable DNA-RuvA(4)-RuvB(12)-RuvC(2) complex forms which resolves the HJ.

It is found in the cytoplasm. Its function is as follows. The RuvA-RuvB-RuvC complex processes Holliday junction (HJ) DNA during genetic recombination and DNA repair, while the RuvA-RuvB complex plays an important role in the rescue of blocked DNA replication forks via replication fork reversal (RFR). RuvA specifically binds to HJ cruciform DNA, conferring on it an open structure. The RuvB hexamer acts as an ATP-dependent pump, pulling dsDNA into and through the RuvAB complex. HJ branch migration allows RuvC to scan DNA until it finds its consensus sequence, where it cleaves and resolves the cruciform DNA. This is Holliday junction branch migration complex subunit RuvA from Leuconostoc citreum (strain KM20).